The following is a 219-amino-acid chain: Ribose-5-phosphate isomerase A (219 aa).

Residues Thr-28–Thr-31, Asp-81–Asp-84, and Lys-94–Gly-97 each bind substrate. Glu-103 acts as the Proton acceptor in catalysis. Lys-121 is a substrate binding site.

It belongs to the ribose 5-phosphate isomerase family. In terms of assembly, homodimer.

It catalyses the reaction aldehydo-D-ribose 5-phosphate = D-ribulose 5-phosphate. Its pathway is carbohydrate degradation; pentose phosphate pathway; D-ribose 5-phosphate from D-ribulose 5-phosphate (non-oxidative stage): step 1/1. Its function is as follows. Catalyzes the reversible conversion of ribose-5-phosphate to ribulose 5-phosphate. The polypeptide is Ribose-5-phosphate isomerase A (Acidithiobacillus ferrooxidans (strain ATCC 23270 / DSM 14882 / CIP 104768 / NCIMB 8455) (Ferrobacillus ferrooxidans (strain ATCC 23270))).